Reading from the N-terminus, the 442-residue chain is F-box only protein 39 (442 aa).

Residues 16–61 form the F-box domain; sequence WAFLPDLCLCRVFWWLGDRDRSRAALVCRKWNQMMYSAELWRYRTI.

As to quaternary structure, directly interacts with SKP1 and CUL1.

Its function is as follows. Substrate-recognition component of the SCF (SKP1-CUL1-F-box protein)-type E3 ubiquitin ligase complex. The sequence is that of F-box only protein 39 (FBXO39) from Homo sapiens (Human).